The following is a 199-amino-acid chain: Pyridoxal 5'-phosphate synthase subunit PdxT (199 aa).

An L-glutamine-binding site is contributed by 49-51 (GES). C81 (nucleophile) is an active-site residue. L-glutamine is bound by residues R110 and 139–140 (IR). Residues H175 and E177 each act as charge relay system in the active site.

Belongs to the glutaminase PdxT/SNO family. In terms of assembly, in the presence of PdxS, forms a dodecamer of heterodimers. Only shows activity in the heterodimer.

It carries out the reaction aldehydo-D-ribose 5-phosphate + D-glyceraldehyde 3-phosphate + L-glutamine = pyridoxal 5'-phosphate + L-glutamate + phosphate + 3 H2O + H(+). It catalyses the reaction L-glutamine + H2O = L-glutamate + NH4(+). It participates in cofactor biosynthesis; pyridoxal 5'-phosphate biosynthesis. Catalyzes the hydrolysis of glutamine to glutamate and ammonia as part of the biosynthesis of pyridoxal 5'-phosphate. The resulting ammonia molecule is channeled to the active site of PdxS. This chain is Pyridoxal 5'-phosphate synthase subunit PdxT, found in Frankia alni (strain DSM 45986 / CECT 9034 / ACN14a).